Consider the following 1567-residue polypeptide: ABC multidrug transporter MDR1 (1567 aa).

The span at 1–11 (MASQPPQPPSG) shows a compositional bias: pro residues. The interval 1 to 37 (MASQPPQPPSGQPDTQYEEYQSEVITETTNRPTPAAD) is disordered. The segment covering 22–32 (SEVITETTNRP) has biased composition (polar residues). 3 N-linked (GlcNAc...) asparagine glycosylation sites follow: N149, N157, and N356. An ABC transporter 1 domain is found at 167-432 (VQYQDTFLSP…FEEMGWYCPP (266 aa)). 6 helical membrane passes run 543 to 563 (STIA…SLFF), 571 to 591 (GFFA…LMSI), 636 to 656 (IPIK…LGGL), 661 to 681 (AKFF…SAIF), 691 to 711 (IPQA…YTGF), and 798 to 818 (LGIL…VSEL). 3 N-linked (GlcNAc...) asparagine glycosylation sites follow: N819, N895, and N912. Positions 891–1134 (FTWRNVTYDI…LLNYFETHGA (244 aa)) constitute an ABC transporter 2 domain. Position 927 to 934 (927 to 934 (GVSGAGKT)) interacts with ATP. The tract at residues 1172–1202 (ESRHVQQELDRIQSETSKRNEGHGQSAEKEP) is disordered. Residues 1231-1251 (IWGKLLLGLTSALFIGFSFFL) form a helical membrane-spanning segment. The N-linked (GlcNAc...) asparagine glycan is linked to N1253. 5 consecutive transmembrane segments (helical) span residues 1257–1277 (AGLQ…SSLV), 1305–1325 (VFLL…GIIA), 1345–1365 (ILLL…QMII), 1372–1392 (ETAG…NGVL), and 1498–1518 (GIGW…YYLI).

The protein belongs to the ABC transporter superfamily. ABCG family. PDR (TC 3.A.1.205) subfamily.

The protein localises to the cell membrane. It catalyses the reaction voriconazole(in) + ATP + H2O = voriconazole(out) + ADP + phosphate + H(+). It carries out the reaction fluconazole(in) + ATP + H2O = fluconazole(out) + ADP + phosphate + H(+). The catalysed reaction is (R)-miconazole(in) + ATP + H2O = (R)-miconazole(out) + ADP + phosphate + H(+). The enzyme catalyses (S)-miconazole(in) + ATP + H2O = (S)-miconazole(out) + ADP + phosphate + H(+). Functionally, pleiotropic ABC efflux transporter that may be involved in the modulation susceptibility to a wide range of unrelated cytotoxic compounds. This chain is ABC multidrug transporter MDR1, found in Trichophyton equinum (strain ATCC MYA-4606 / CBS 127.97) (Horse ringworm fungus).